Consider the following 445-residue polypeptide: Chromosome partition protein MukF (445 aa).

Residues 212-240 (LDETSGNLRELQDTLNAAGDKLQEQLLRI) form a leucine-zipper region.

The protein belongs to the MukF family. As to quaternary structure, interacts, and probably forms a ternary complex, with MukE and MukB via its C-terminal region. The complex formation is stimulated by calcium or magnesium. It is required for an interaction between MukE and MukB.

It localises to the cytoplasm. The protein localises to the nucleoid. Involved in chromosome condensation, segregation and cell cycle progression. May participate in facilitating chromosome segregation by condensation DNA from both sides of a centrally located replisome during cell division. Not required for mini-F plasmid partitioning. Probably acts via its interaction with MukB and MukE. Overexpression results in anucleate cells. It has a calcium binding activity. The polypeptide is Chromosome partition protein MukF (Mannheimia succiniciproducens (strain KCTC 0769BP / MBEL55E)).